Consider the following 678-residue polypeptide: Catalase (678 aa).

Over residues M1–K26 the composition is skewed to basic and acidic residues. The disordered stretch occupies residues M1 to G32. Residues H75 and N148 contribute to the active site. Y362 is a heme binding site.

It belongs to the catalase family. HPII subfamily. Heme serves as cofactor.

It is found in the cytoplasm. The catalysed reaction is 2 H2O2 = O2 + 2 H2O. Functionally, decomposes hydrogen peroxide into water and oxygen; serves to protect cells from the toxic effects of hydrogen peroxide. The chain is Catalase (katE) from Alkalihalophilus pseudofirmus (strain ATCC BAA-2126 / JCM 17055 / OF4) (Bacillus pseudofirmus).